Here is a 486-residue protein sequence, read N- to C-terminus: Glutamyl-tRNA(Gln) amidotransferase subunit A (486 aa).

Active-site charge relay system residues include Lys75 and Ser150. The active-site Acyl-ester intermediate is the Ser174.

The protein belongs to the amidase family. GatA subfamily. In terms of assembly, heterotrimer of A, B and C subunits.

It carries out the reaction L-glutamyl-tRNA(Gln) + L-glutamine + ATP + H2O = L-glutaminyl-tRNA(Gln) + L-glutamate + ADP + phosphate + H(+). Its function is as follows. Allows the formation of correctly charged Gln-tRNA(Gln) through the transamidation of misacylated Glu-tRNA(Gln) in organisms which lack glutaminyl-tRNA synthetase. The reaction takes place in the presence of glutamine and ATP through an activated gamma-phospho-Glu-tRNA(Gln). The protein is Glutamyl-tRNA(Gln) amidotransferase subunit A of Trichormus variabilis (strain ATCC 29413 / PCC 7937) (Anabaena variabilis).